The following is a 1841-amino-acid chain: Sodium channel protein type 4 subunit alpha (1841 aa).

The Cytoplasmic portion of the chain corresponds to 1 to 131 (MASSSLPTLV…RVAIKVLIHA (131 aa)). The span at 32–60 (AMEEEARLQRNKQMEIEEPERKPRSDLEA) shows a compositional bias: basic and acidic residues. The interval 32-63 (AMEEEARLQRNKQMEIEEPERKPRSDLEAGKN) is disordered. The stretch at 113–448 (MLSPFSIVRR…VVAMAYAEQN (336 aa)) is one I repeat. A helical transmembrane segment spans residues 132-150 (LFSMFIMITILTNCVFMTM). The Extracellular segment spans residues 151–157 (SNPPSWS). Residues 158-178 (KDVEYTFTGIYTFESLIKMLA) form a helical membrane-spanning segment. The Cytoplasmic portion of the chain corresponds to 179 to 192 (RGFCIDDFTFLRDP). Residues 193-210 (WNWLDFSVITMAYVTEFV) traverse the membrane as a helical segment. Residues 211-216 (DLGNIS) are Extracellular-facing. N-linked (GlcNAc...) asparagine glycosylation is present at Asn214. Residues 217–233 (ALRTFRVLRALKTITVI) traverse the membrane as a helical segment. Topologically, residues 234–252 (PGLKTIVGALIQSVKKLSD) are cytoplasmic. A helical membrane pass occupies residues 253 to 272 (VMILTVFCLSVFALVGLQLF). Over 273 to 385 (MGNLRQKCVR…PNYGYTSYDT (113 aa)) the chain is Extracellular. Cys280 and Cys354 form a disulfide bridge. N-linked (GlcNAc...) asparagine glycans are attached at residues Asn288, Asn291, Asn297, Asn303, Asn315, Asn327, and Asn356. Cys363 and Cys369 are joined by a disulfide. Positions 386–410 (FSWAFLALFRLMTQDYWENLFQLTL) form an intramembrane region, pore-forming. Residues 411-417 (RAAGKTY) are Extracellular-facing. A helical transmembrane segment spans residues 418–438 (MIFFVVIIFLGSFYLINLILA). The Cytoplasmic segment spans residues 439 to 572 (VVAMAYAEQN…HIILLIVMDP (134 aa)). Residues 484–522 (ALEGGEEADGDPTHSKDCNGSLDTSGEKGPPRPSCSAES) form a disordered region. Residues 554-826 (CCAPWVKFKH…QIAIGRIKWG (273 aa)) form an II repeat. Residues 573–591 (FVDLGITICIVLNTLFMAM) traverse the membrane as a helical segment. The Extracellular portion of the chain corresponds to 592 to 602 (EHYPMTEHFDN). The helical transmembrane segment at 603–622 (VLSVGNLVFTGIFTAEMVLK) threads the bilayer. Residues 623–636 (LIAMDPYEYFQQGW) are Cytoplasmic-facing. A helical transmembrane segment spans residues 637-656 (NIFDSFIVTLSLVELGLANV). The Extracellular portion of the chain corresponds to 657–658 (QG). Residues 659-676 (LSVLRSFRLLRVFKLAKS) traverse the membrane as a helical segment. The Cytoplasmic segment spans residues 677–692 (WPTLNMLIKIIGNSVG). A helical transmembrane segment spans residues 693–711 (ALGNLTLVLAIIVFIFAVV). The Extracellular portion of the chain corresponds to 712 to 740 (GMQLFGKSYKECVCKIASDCSLPRWHMHD). Cys725 and Cys731 are oxidised to a cystine. Residues 741–761 (FFHSFLIVFRILCGEWIETMW) constitute an intramembrane region (pore-forming). Residues 762-772 (DCMEVAGQAMC) lie on the Extracellular side of the membrane. Cys763 and Cys772 form a disulfide bridge. Residues 773–791 (LTVFLMVMVIGNLVVLNLF) form a helical membrane-spanning segment. The Cytoplasmic portion of the chain corresponds to 792–1026 (LALLLSSFSA…ACFKIVEHNW (235 aa)). Disordered stretches follow at residues 854-896 (EPGG…LTDG) and 925-983 (SDLE…EGEL). Over residues 867–887 (EDEKKEPPPEDGNKELKDNHI) the composition is skewed to basic and acidic residues. 2 stretches are compositionally biased toward acidic residues: residues 925-941 (SDLE…FSEP) and 969-983 (EDPE…EGEL). Residues 1007 to 1320 (RGKMWWTLRR…KKYYNAMKKL (314 aa)) form an III repeat. The chain crosses the membrane as a helical span at residues 1027 to 1044 (FETFIVFMILLSSGALAF). At 1045–1057 (EDIYIEQRRVIRT) the chain is on the extracellular side. A helical transmembrane segment spans residues 1058-1076 (ILEYADKVFTYIFILEMLL). Residues 1077 to 1090 (KWVAYGFKVYFTNA) lie on the Cytoplasmic side of the membrane. The helical transmembrane segment at 1091-1109 (WCWLDFLIVDVSIISLVAN) threads the bilayer. Topologically, residues 1110–1117 (WLGYSELG) are extracellular. The helical transmembrane segment at 1118–1136 (PIKSLRTLRALRPLRALSR) threads the bilayer. Over 1137 to 1153 (FEGMRVVVNALLGAIPS) the chain is Cytoplasmic. A helical membrane pass occupies residues 1154–1173 (IMNVLLVCLIFWLIFSIMGV). Residues 1174-1224 (NLFAGKFYYCINTTTSERFDISVVNNKSECESLMYTGQVRWMNVKVNYDNV) lie on the Extracellular side of the membrane. Cys1183 and Cys1203 are disulfide-bonded. N-linked (GlcNAc...) asparagine glycans are attached at residues Asn1185 and Asn1199. Positions 1225–1246 (GLGYLSLLQVATFKGWMDIMYA) form an intramembrane region, pore-forming. Residues 1247–1263 (AVDSREKEEQPDYEVNL) lie on the Extracellular side of the membrane. The chain crosses the membrane as a helical span at residues 1264 to 1285 (YMYLYFVIFIIFGSFFTLNLFI). The Cytoplasmic portion of the chain corresponds to 1286–1348 (GVIIDNFNQQ…MVYDFVTKQV (63 aa)). The important for rapid channel inactivation stretch occupies residues 1304-1306 (IFM). The stretch at 1329–1627 (IPRPQNKIQG…WEKFDPDATQ (299 aa)) is one IV repeat. The helical transmembrane segment at 1349 to 1366 (FDISIMILICLNMVTMMV) threads the bilayer. Residues 1367–1377 (ETDDQSQLKVD) lie on the Extracellular side of the membrane. A helical transmembrane segment spans residues 1378–1396 (ILYNINMVFIIVFTGECVL). Residues 1397–1408 (KMFALRHYYFTI) are Cytoplasmic-facing. Residues 1409–1426 (GWNIFDFVVVILSIVGLA) form a helical membrane-spanning segment. The Extracellular segment spans residues 1427–1439 (LSDLIQKYFVSPT). The helical transmembrane segment at 1440-1456 (LFRVIRLARIGRVLRLI) threads the bilayer. Topologically, residues 1457–1475 (RGAKGIRTLLFALMMSLPA) are cytoplasmic. A helical membrane pass occupies residues 1476-1493 (LFNIGLLLFLVMFIYSIF). Over 1494-1515 (GMSNFAYVKKESGIDDMFNFET) the chain is Extracellular. Positions 1516–1538 (FGNSIICLFEITTSAGWDGLLNP) form an intramembrane region, pore-forming. The Extracellular portion of the chain corresponds to 1539–1568 (ILNSGPPDCDPTLENPGTNIKGDCGNPSIG). Cys1547 and Cys1562 form a disulfide bridge. A helical transmembrane segment spans residues 1569 to 1591 (ICFFCSYIIISFLIVVNMYIAII). The Cytoplasmic segment spans residues 1592-1841 (LENFNVATEE…VRPGVKESLV (250 aa)). In terms of domain architecture, IQ spans 1721–1750 (EEVCAIKIQRAYRRHLLQRSVKQASYMYRH). A compositionally biased stretch (basic and acidic residues) spans 1776–1794 (SEKEDNGVQSQGEKEKDST). Positions 1776–1841 (SEKEDNGVQS…VRPGVKESLV (66 aa)) are disordered. The segment covering 1801–1812 (TEVTAPSSSDTA) has biased composition (polar residues). Residues 1814–1826 (TPPPPSPPPPSSP) show a composition bias toward pro residues.

Belongs to the sodium channel (TC 1.A.1.10) family. Nav1.4/SCN4A subfamily. In terms of assembly, the Nav1.4 voltage-gated sodium channel consists of an ion-conducting alpha subunit SCN4A which is functional on its own and a regulatory beta subunit SCN1B. SCN1B strongly enhances the presence of SCN4A at the cell surface. SCN1B is also required for rapid channel inactivation and recovery after inactivation. It prevents the decrease of channel activity in response to repetitive, high-frequency depolarizations. Interacts with the syntrophins SNTA1, SNTB1 and SNTB2 (via PDZ domain); probably links SCN4A to the actin cytoskeleton and the extracellular matrix via the dystrophin-associated protein complex and regulates its localization in muscle cells. Interacts with TMEM233; probable regulator of the channel. Detected in quadriceps muscle (at protein level). Detected in hind-limb skeletal muscles, but not in heart or brain. Detected at low levels in the myocardium. According to Pubme=26427606 detected also in brain.

It localises to the cell membrane. The catalysed reaction is Na(+)(in) = Na(+)(out). Its activity is regulated as follows. The channel is inhibited by tetrodotoxin. Functionally, pore-forming subunit of Nav1.4, a voltage-gated sodium (Nav) channel that directly mediates the depolarizing phase of action potentials in excitable membranes. Navs, also called VGSCs (voltage-gated sodium channels) or VDSCs (voltage-dependent sodium channels), operate by switching between closed and open conformations depending on the voltage difference across the membrane. In the open conformation they allow Na(+) ions to selectively pass through the pore, along their electrochemical gradient. The influx of Na+ ions provokes membrane depolarization, initiating the propagation of electrical signals throughout cells and tissues. Highly expressed in skeletal muscles, Nav1.4 generates the action potential crucial for muscle contraction. This is Sodium channel protein type 4 subunit alpha from Mus musculus (Mouse).